The primary structure comprises 252 residues: 2-succinyl-6-hydroxy-2,4-cyclohexadiene-1-carboxylate synthase (252 aa).

The protein belongs to the AB hydrolase superfamily. MenH family. Monomer.

The enzyme catalyses 5-enolpyruvoyl-6-hydroxy-2-succinyl-cyclohex-3-ene-1-carboxylate = (1R,6R)-6-hydroxy-2-succinyl-cyclohexa-2,4-diene-1-carboxylate + pyruvate. It participates in quinol/quinone metabolism; 1,4-dihydroxy-2-naphthoate biosynthesis; 1,4-dihydroxy-2-naphthoate from chorismate: step 3/7. It functions in the pathway quinol/quinone metabolism; menaquinone biosynthesis. In terms of biological role, catalyzes a proton abstraction reaction that results in 2,5-elimination of pyruvate from 2-succinyl-5-enolpyruvyl-6-hydroxy-3-cyclohexene-1-carboxylate (SEPHCHC) and the formation of 2-succinyl-6-hydroxy-2,4-cyclohexadiene-1-carboxylate (SHCHC). This Escherichia coli O9:H4 (strain HS) protein is 2-succinyl-6-hydroxy-2,4-cyclohexadiene-1-carboxylate synthase.